Reading from the N-terminus, the 904-residue chain is MNMIQNILRVILGSKFERDLKKLIPIVGQINSLEKEMKETSDSLLSSQTQKFRERIARGESLDSILPEAFATVREVSLRTMGMRHFDVQMMGGIALHRGNIAEMKTGEGKTLTSTLAVYLNSLAGKGVHVVTVNDYLAKRDANWMKPIYDFLGISVGVIQHDMDHEQRKIAYSADITYGTNNEFGFDYLRDNMVSHKDHKVQRSHFFAIVDEVDSILIDEARTPLIISGSSDETTDKYVRINKIIPKLVAIEDFEVDEKARNVLLSEKGVSHVEEILGIENLYAPENVDLVHHVHQALKAHKIFQKDVDYVVQNGEVIIVDEFTGRLMAGRRYSDGLHQALEAKESVTIAKESQTLASITFQNYFRMYDKLAGMTGTADTEAEEFRKIYDLDVIVIPPNVSVRRKDSPDRVYRTEKEKFDAILAEIRELQSKKQPVLVGTISIEKSEILSKMLSSAGIQHNVLNAKFHEREAEIVANAGKPGAVTIATNMAGRGTDIVLGGAQLYKENLETWKDDDDLVRRFKESILKQELDNAELLIREMDSSVKQKRASEILESVKIWKKNHEDVLVAGGLHILGTERHEARRIDNQLRGRSGRQGDPGSSRFYLSLQDDLMRIFGSDRISGLMKWANMPEGQEIESKMVSNAIARAQKRVEGHNFDIRKHLLEYDDVMNRQRIVIYKMRNEVLENEDISSLILSFIEEAVENQIVAHCEGNNPSSWNLDSLKEWLEGLELNLEINEEDFKKTKNPQLALFEKVNAAAKQKYEDRAESIGKDIWKLLERNIFLDILDHRWKEHLYSMDHLREGIWTVGYSERNPLVEYKLQGFRMFDVAIENLKNEVVNFLFRVEVSENSKLPEERREYKKVGQEVTGGFQELSSGTPSPTVTVTTSSGGGTERKTSRRRKR.

Residues Q89, 107 to 111 (GEGKT), and D496 each bind ATP. A disordered region spans residues 870-904 (GGFQELSSGTPSPTVTVTTSSGGGTERKTSRRRKR). Over residues 876 to 889 (SSGTPSPTVTVTTS) the composition is skewed to low complexity.

This sequence belongs to the SecA family. Monomer and homodimer. Part of the essential Sec protein translocation apparatus which comprises SecA, SecYEG and auxiliary proteins SecDF. Other proteins may also be involved.

Its subcellular location is the cell inner membrane. The protein localises to the cytoplasm. It carries out the reaction ATP + H2O + cellular proteinSide 1 = ADP + phosphate + cellular proteinSide 2.. Its function is as follows. Part of the Sec protein translocase complex. Interacts with the SecYEG preprotein conducting channel. Has a central role in coupling the hydrolysis of ATP to the transfer of proteins into and across the cell membrane, serving as an ATP-driven molecular motor driving the stepwise translocation of polypeptide chains across the membrane. The sequence is that of Protein translocase subunit SecA from Leptospira borgpetersenii serovar Hardjo-bovis (strain L550).